Reading from the N-terminus, the 244-residue chain is Small ribosomal subunit protein uS2 (244 aa).

The protein belongs to the universal ribosomal protein uS2 family.

In Psychromonas ingrahamii (strain DSM 17664 / CCUG 51855 / 37), this protein is Small ribosomal subunit protein uS2.